The sequence spans 149 residues: Transcriptional regulator MraZ (149 aa).

2 consecutive SpoVT-AbrB domains span residues 7-54 (KYVN…GISH) and 83-126 (AVQL…QPQN).

This sequence belongs to the MraZ family. Forms oligomers.

Its subcellular location is the cytoplasm. The protein localises to the nucleoid. The protein is Transcriptional regulator MraZ of Rickettsia felis (strain ATCC VR-1525 / URRWXCal2) (Rickettsia azadi).